The chain runs to 868 residues: METRNKFMLLACATFSIMSLVKSQNQQGFISLDCGLPSKESYIEPSSNLTFISDVNFIRGGKTGNIQNNSRTNFIFKPFKVLRYFPDGIRNCYSLSVKQGTKYLIRTLFYYGNYDGLNTSPRFDLFLGPNIWTSVDVLIADVGDGVVEEIVHVTRSNILDICLVKTGTSTPMISAIELRPLRYDTYTARTGSLKSMAHFYFTNSDEAIRYPEDVYDRVWMPYSQPEWTQINTTRNVSGFSDGYNPPQGVIQTASIPTNGSEPLTFTWNLESSDDETYAYLFFAEIQQLKVNETREFKILANGVDYIDYTPWKFEARTLSNPAPLKCEGGVCRVQLSKTPKSTLPPLMNAIEIFSVIQFPQSDTNTDEVIAIKKIQSTYQLSRISWQGDPCVPKQFSWMGVSCNVIDISTPPRIISLDLSLSGLTGVISPSIQNLTMLRELDLSNNNLTGEVPEFLATIKPLLVIHLRGNNLRGSVPQALQDREKNDGLKLFVDPNITRRGKHQPKSWLVAIVASISCVAVTIIVLVLIFIFRRRKSSTRKVIRPSLEMKNRRFKYSEVKEMTNNFEVVLGKGGFGVVYHGFLNNEQVAVKVLSQSSTQGYKEFKTEVELLLRVHHVNLVSLVGYCDEGIDLALIYEFMENGNLKEHLSGKRGGSVLNWSSRLKIAIESALGIEYLHIGCQPPMVHRDVKSTNILLGLRFEAKLADFGLSRSFLVGSQAHVSTNVAGTLGYLDPEYYLKNWLTEKSDVYSFGIVLLESITGQPVIEQSRDKSYIVEWAKSMLANGDIESIMDPNLHQDYDSSSSWKALELAMLCINPSSTQRPNMTRVAHELNECLEIYNLTKIRSQDQNSSKSLGHTVTFISDIPSAR.

The signal sequence occupies residues 1–23 (METRNKFMLLACATFSIMSLVKS). Over 24–510 (QNQQGFISLD…KHQPKSWLVA (487 aa)) the chain is Extracellular. Asparagine 48, asparagine 68, asparagine 231, asparagine 235, asparagine 258, asparagine 291, asparagine 433, and asparagine 446 each carry an N-linked (GlcNAc...) asparagine glycan. LRR repeat units lie at residues 412–435 (RIIS…QNLT), 436–458 (MLRE…LATI), and 460–482 (PLLV…LQDR). Asparagine 495 is a glycosylation site (N-linked (GlcNAc...) asparagine). Residues 511-531 (IVASISCVAVTIIVLVLIFIF) form a helical membrane-spanning segment. Residues 532–868 (RRRKSSTRKV…TFISDIPSAR (337 aa)) lie on the Cytoplasmic side of the membrane. The 270-residue stretch at 563-832 (NNFEVVLGKG…NMTRVAHELN (270 aa)) folds into the Protein kinase domain. ATP is bound by residues 569-577 (LGKGGFGVV) and lysine 590. Tyrosine 635 bears the Phosphotyrosine mark. Residue aspartate 687 is the Proton acceptor of the active site. Serine 721 carries the post-translational modification Phosphoserine. A phosphothreonine mark is found at threonine 722 and threonine 727. The residue at position 735 (tyrosine 735) is a Phosphotyrosine.

Belongs to the protein kinase superfamily. Ser/Thr protein kinase family.

Its subcellular location is the cell membrane. It catalyses the reaction L-seryl-[protein] + ATP = O-phospho-L-seryl-[protein] + ADP + H(+). The catalysed reaction is L-threonyl-[protein] + ATP = O-phospho-L-threonyl-[protein] + ADP + H(+). This Arabidopsis thaliana (Mouse-ear cress) protein is Leucine-rich repeat receptor-like serine/threonine-protein kinase At2g14510.